A 517-amino-acid chain; its full sequence is Glycerol kinase (517 aa).

Thr-24 provides a ligand contact to ADP. ATP contacts are provided by Thr-24, Thr-25, and Ser-26. Sn-glycerol 3-phosphate is bound at residue Thr-24. Arg-28 serves as a coordination point for ADP. Residues Arg-94, Glu-95, Tyr-146, and Asp-261 each contribute to the sn-glycerol 3-phosphate site. Positions 94, 95, 146, 261, and 262 each coordinate glycerol. 2 residues coordinate ADP: Thr-283 and Gly-327. ATP contacts are provided by Thr-283, Gly-327, Gln-331, and Gly-428. ADP-binding residues include Gly-428 and Asn-432.

It belongs to the FGGY kinase family.

It carries out the reaction glycerol + ATP = sn-glycerol 3-phosphate + ADP + H(+). It functions in the pathway polyol metabolism; glycerol degradation via glycerol kinase pathway; sn-glycerol 3-phosphate from glycerol: step 1/1. Its activity is regulated as follows. Inhibited by fructose 1,6-bisphosphate (FBP). In terms of biological role, key enzyme in the regulation of glycerol uptake and metabolism. Catalyzes the phosphorylation of glycerol to yield sn-glycerol 3-phosphate. The chain is Glycerol kinase from Mycobacterium tuberculosis (strain ATCC 25177 / H37Ra).